A 244-amino-acid chain; its full sequence is Monothiol glutaredoxin-4 (244 aa).

In terms of domain architecture, Thioredoxin spans 3-110 (VVEIKSQDQF…FVKSLEILSN (108 aa)). The tract at residues 116–143 (ANNAKGPKSTSDEESSGSSDDEEDETEE) is disordered. The span at 127 to 143 (DEESSGSSDDEEDETEE) shows a compositional bias: acidic residues. The Glutaredoxin domain occupies 146 to 244 (NARLVKLVQA…DPEYFQHALQ (99 aa)). Residue lysine 163 coordinates glutathione. Position 171 (cysteine 171) interacts with [2Fe-2S] cluster. Residues arginine 200, phenylalanine 212, and 225 to 226 (LD) each bind glutathione.

Belongs to the glutaredoxin family. Monothiol subfamily. In terms of assembly, homodimer. Heterodimer with FRA2.

Monothiol glutaredoxin involved in the biogenesis of iron-sulfur clusters. Binds one iron-sulfur cluster per dimer. The iron-sulfur cluster is bound between subunits, and is complexed by a bound glutathione and a cysteine residue from each subunit. This is Monothiol glutaredoxin-4 (GRX4) from Saccharomyces cerevisiae (strain ATCC 204508 / S288c) (Baker's yeast).